Consider the following 248-residue polypeptide: 2,3-bisphosphoglycerate-dependent phosphoglycerate mutase (248 aa).

Substrate is bound by residues 8 to 15, 21 to 22, Arg60, 87 to 90, Lys98, 114 to 115, and 183 to 184; these read RHGESTWN, TG, ERHY, RR, and GN. The Tele-phosphohistidine intermediate role is filled by His9. The active-site Proton donor/acceptor is the Glu87.

It belongs to the phosphoglycerate mutase family. BPG-dependent PGAM subfamily. Homodimer.

The enzyme catalyses (2R)-2-phosphoglycerate = (2R)-3-phosphoglycerate. Its pathway is carbohydrate degradation; glycolysis; pyruvate from D-glyceraldehyde 3-phosphate: step 3/5. Its function is as follows. Catalyzes the interconversion of 2-phosphoglycerate and 3-phosphoglycerate. The chain is 2,3-bisphosphoglycerate-dependent phosphoglycerate mutase from Burkholderia cenocepacia (strain ATCC BAA-245 / DSM 16553 / LMG 16656 / NCTC 13227 / J2315 / CF5610) (Burkholderia cepacia (strain J2315)).